A 147-amino-acid polypeptide reads, in one-letter code: Sentan (147 aa).

Residues 14 to 34 form a disordered region; it reads RLEGEPNPPAAPTSTLAPKNM. A compositionally biased stretch (polar residues) spans 25–34; that stretch reads PTSTLAPKNM.

The protein belongs to the S-100 family.

It is found in the cell projection. It localises to the cilium. In terms of biological role, may be a component of the linker structure that bridges the ciliary membrane and peripheral singlet microtubules. In Bos taurus (Bovine), this protein is Sentan (SNTN).